Consider the following 121-residue polypeptide: Small ribosomal subunit protein uS13 (121 aa).

Residues 91–121 form a disordered region; it reads HRRGLPVRGQNTKNNARTRKGKKASMAGKKK. A compositionally biased stretch (basic residues) spans 106–121; that stretch reads ARTRKGKKASMAGKKK.

It belongs to the universal ribosomal protein uS13 family. In terms of assembly, part of the 30S ribosomal subunit. Forms a loose heterodimer with protein S19. Forms two bridges to the 50S subunit in the 70S ribosome.

Its function is as follows. Located at the top of the head of the 30S subunit, it contacts several helices of the 16S rRNA. In the 70S ribosome it contacts the 23S rRNA (bridge B1a) and protein L5 of the 50S subunit (bridge B1b), connecting the 2 subunits; these bridges are implicated in subunit movement. Contacts the tRNAs in the A and P-sites. The protein is Small ribosomal subunit protein uS13 of Lacticaseibacillus paracasei (strain ATCC 334 / BCRC 17002 / CCUG 31169 / CIP 107868 / KCTC 3260 / NRRL B-441) (Lactobacillus paracasei).